The chain runs to 515 residues: Membrane-bound lytic murein transglycosylase F (515 aa).

The N-terminal stretch at 1–32 is a signal peptide; the sequence is MKKLKINYLFIGILTLLLAAALWPSIPWFGKA. The segment at 33-269 is non-LT domain; sequence DNRIAAIQSR…RMEEKYLGHG (237 aa). Residues 270-515 form an LT domain region; it reads DDFDYVDTRT…PFSLKKKDEN (246 aa). Residue glutamate 314 is part of the active site. The segment at 493-515 is disordered; the sequence is QPSSNYLSHSPSLPFSLKKKDEN.

It in the N-terminal section; belongs to the bacterial solute-binding protein 3 family. In the C-terminal section; belongs to the transglycosylase Slt family.

It localises to the cell outer membrane. The catalysed reaction is Exolytic cleavage of the (1-&gt;4)-beta-glycosidic linkage between N-acetylmuramic acid (MurNAc) and N-acetylglucosamine (GlcNAc) residues in peptidoglycan, from either the reducing or the non-reducing ends of the peptidoglycan chains, with concomitant formation of a 1,6-anhydrobond in the MurNAc residue.. Functionally, murein-degrading enzyme that degrades murein glycan strands and insoluble, high-molecular weight murein sacculi, with the concomitant formation of a 1,6-anhydromuramoyl product. Lytic transglycosylases (LTs) play an integral role in the metabolism of the peptidoglycan (PG) sacculus. Their lytic action creates space within the PG sacculus to allow for its expansion as well as for the insertion of various structures such as secretion systems and flagella. The protein is Membrane-bound lytic murein transglycosylase F of Citrobacter koseri (strain ATCC BAA-895 / CDC 4225-83 / SGSC4696).